The primary structure comprises 387 residues: Acetylornithine deacetylase (387 aa).

A Zn(2+)-binding site is contributed by His80. The active site involves Asp82. Asp112 contributes to the Zn(2+) binding site. Residue Glu144 is part of the active site. Zn(2+) is bound by residues Glu145, Glu169, and His355.

This sequence belongs to the peptidase M20A family. ArgE subfamily. As to quaternary structure, homodimer. Zn(2+) serves as cofactor. Requires Co(2+) as cofactor. The cofactor is glutathione.

It is found in the cytoplasm. The enzyme catalyses N(2)-acetyl-L-ornithine + H2O = L-ornithine + acetate. Its pathway is amino-acid biosynthesis; L-arginine biosynthesis; L-ornithine from N(2)-acetyl-L-ornithine (linear): step 1/1. In terms of biological role, catalyzes the hydrolysis of the amide bond of N(2)-acetylated L-amino acids. Cleaves the acetyl group from N-acetyl-L-ornithine to form L-ornithine, an intermediate in L-arginine biosynthesis pathway, and a branchpoint in the synthesis of polyamines. This Proteus mirabilis (strain HI4320) protein is Acetylornithine deacetylase.